Reading from the N-terminus, the 1293-residue chain is Enterobactin synthase component F (1293 aa).

Positions 1–301 are elongation/condensation; the sequence is MSQHLPLVAA…NVLPLGIHIA (301 aa). The tract at residues 482 to 887 is adenylatione; sequence SYREMREQVV…ALPDVEQAVT (406 aa). Residues 971 to 1046 form the Carrier domain; the sequence is APKAGSETII…KLATIIDAEE (76 aa). S1006 is subject to O-(pantetheine 4'-phosphoryl)serine. The tract at residues 1066–1293 is thioesterase; that stretch reads PTLFCFHPAS…GPIIRATLNR (228 aa). The Proton acceptor; for thioesterase activity role is filled by H1271.

The protein belongs to the ATP-dependent AMP-binding enzyme family. EntF subfamily. Proteins EntB, EntD, EntE and EntF are the component of the enterobactin synthase. Components probably do not form a stable complex. EntF acts as a catalytic monomer. Interacts with the MbtH-like protein YbdZ. YbdZ binds to the adenylation domain, but does not alter the structure of the domain. It depends on pantetheine 4'-phosphate as a cofactor. 4'-phosphopantetheine is transferred from CoA to a specific serine of apo-EntF by EntD. Holo-EntF so formed is then acylated with seryl-AMP.

It is found in the cytoplasm. The enzyme catalyses 3 2,3-dihydroxybenzoate + 3 L-serine + 6 ATP = enterobactin + 6 AMP + 6 diphosphate + 4 H(+). It carries out the reaction holo-[peptidyl-carrier protein] + L-serine + ATP = L-seryl-[peptidyl-carrier protein] + AMP + diphosphate. It functions in the pathway siderophore biosynthesis; enterobactin biosynthesis. Its activity is regulated as follows. Adenylation activity is increased in the presence of the MbtH-like protein YbdZ. Functionally, involved in the biosynthesis of the siderophore enterobactin (enterochelin), which is a macrocyclic trimeric lactone of N-(2,3-dihydroxybenzoyl)-serine. EntF catalyzes the activation of L-serine via ATP-dependent PPi exchange reaction to form seryladenylate. Activated L-serine is loaded onto the peptidyl carrier domain via a thioester linkage to the phosphopanthetheine moiety, forming seryl-S-Ppant-EntF. EntF acts then as the sole catalyst for the formation of the three amide and three ester linkages found in enterobactin, using seryladenylate and 2,3-dihydroxybenzoate-S-Ppant-EntB (DHB-S-Ppant-EntB) as substrates, via the formation of a DHB-Ser-S-Ppant-EntF intermediate. The protein is Enterobactin synthase component F of Escherichia coli (strain K12).